We begin with the raw amino-acid sequence, 622 residues long: Serine/threonine-protein kinase PknB (622 aa).

The Cytoplasmic segment spans residues 1 to 328 (MTTPPHLSDR…TESDGSIGRW (328 aa)). The 263-residue stretch at 11–273 (YELGDILGFG…TAAEMRADLI (263 aa)) folds into the Protein kinase domain. ATP contacts are provided by residues 17 to 25 (LGFGGMSEV), Lys40, and 93 to 95 (EYV). Asp138 (proton acceptor) is an active-site residue. ATP contacts are provided by residues 140–143 (KPAN) and Asp156. Mg(2+) is bound by residues Asn143 and Asp156. A phosphoserine; by autocatalysis mark is found at Ser166 and Ser168. A phosphothreonine; by autocatalysis mark is found at Thr170, Thr172, and Thr308. Residues 329–349 (VAVVAVLAVLTIAIVAAFNTF) form a helical membrane-spanning segment. The Extracellular portion of the chain corresponds to 350–622 (GGNTRDVQVP…DGIITLKFGQ (273 aa)). PASTA domains are found at residues 352–418 (NTRD…NVST), 419–486 (GPEQ…IVGS), 487–553 (GPET…QVSK), and 554–622 (GNQF…KFGQ). The interval 381–404 (RTLQKPDSTIPPDHVISTEPGANA) is disordered.

The protein belongs to the protein kinase superfamily. Ser/Thr protein kinase family. As to quaternary structure, homodimer. In terms of processing, autophosphorylated. Dephosphorylated by PstP.

It localises to the cell membrane. It carries out the reaction L-seryl-[protein] + ATP = O-phospho-L-seryl-[protein] + ADP + H(+). It catalyses the reaction L-threonyl-[protein] + ATP = O-phospho-L-threonyl-[protein] + ADP + H(+). In terms of biological role, protein kinase that regulates many aspects of mycobacterial physiology. Is a key component of a signal transduction pathway that regulates cell growth, cell shape and cell division via phosphorylation of target proteins. This Mycobacterium leprae (strain TN) protein is Serine/threonine-protein kinase PknB (pknB).